Reading from the N-terminus, the 96-residue chain is MSAFNIFALVVVVCALMINECCTSQEPTTPLKAASQCSNVKCRRRFDHLGNSVTEGCPSGCLCVYQATGYNQEANGTCYELMKTSTTTTTEGTPAQ.

The signal sequence occupies residues methionine 1 to serine 24. 3 cysteine pairs are disulfide-bonded: cysteine 37-cysteine 61, cysteine 42-cysteine 63, and cysteine 57-cysteine 78.

The protein belongs to the RaCI family. As to expression, expressed in salivary glands.

The protein localises to the secreted. Complement inhibitor. Prevents complement-mediated C5 activation by binding to C5. Binds C5 at a different binding site than the other tick complement inhibitors OmCI and CirpT1, and the drug eculizumab. Inhibits complement in human and guinea pig but not in other species tested (rabbit, rat, mouse, and pig). The protein is Complement inhibitor RaCI4 of Hyalomma rufipes (Tick).